Here is a 25-residue protein sequence, read N- to C-terminus: Cysteine protease inhibitor 2 (25 aa).

Belongs to the protease inhibitor I3 (leguminous Kunitz-type inhibitor) family. In terms of tissue distribution, cortex of tuber.

In terms of biological role, inhibitor of subtilisin. Inhibits moderately trypsin and chymotrypsin (serine proteases). May protect the plant by inhibiting proteases of invading organisms. The chain is Cysteine protease inhibitor 2 from Solanum tuberosum (Potato).